The sequence spans 181 residues: Protein Syd (181 aa).

It belongs to the Syd family.

The protein localises to the cell inner membrane. Functionally, interacts with the SecY protein in vivo. May bind preferentially to an uncomplexed state of SecY, thus functioning either as a chelating agent for excess SecY in the cell or as a regulatory factor that negatively controls the translocase function. The polypeptide is Protein Syd (Shigella dysenteriae serotype 1 (strain Sd197)).